The following is a 599-amino-acid chain: Putative sensor histidine kinase NtrY-like (599 aa).

Helical transmembrane passes span 17-37, 44-64, 85-105, and 285-305; these read VLIFTLATAAIIFACATFYVI, FSTIIGFLLVDLAIFLILGVV, IVIAFSLVAAIPTIIVSVFSV, and IMFIFIALLLLFVAISFGVIF. An HAMP domain is found at 307–361; that stretch reads AKIVKPIKKLVTATDNVKDGDLTVQVPENEVDKDEIGTLYVAFNRMIKQLSRQQR. One can recognise a Histidine kinase domain in the interval 378 to 589; sequence KVAHEIKNPL…IIDIKFDLKE (212 aa). His-381 is modified (phosphohistidine; by autocatalysis).

Its subcellular location is the cell membrane. It carries out the reaction ATP + protein L-histidine = ADP + protein N-phospho-L-histidine.. In terms of biological role, member of the two-component regulatory system RC0948/RC0849. The polypeptide is Putative sensor histidine kinase NtrY-like (Rickettsia conorii (strain ATCC VR-613 / Malish 7)).